Reading from the N-terminus, the 219-residue chain is Ribose-5-phosphate isomerase A (219 aa).

Residues 28–31 (SGST), 81–84 (DGAD), and 94–97 (KGGG) contribute to the substrate site. Residue Glu-103 is the Proton acceptor of the active site. Lys-121 provides a ligand contact to substrate.

The protein belongs to the ribose 5-phosphate isomerase family. In terms of assembly, homodimer.

It carries out the reaction aldehydo-D-ribose 5-phosphate = D-ribulose 5-phosphate. It functions in the pathway carbohydrate degradation; pentose phosphate pathway; D-ribose 5-phosphate from D-ribulose 5-phosphate (non-oxidative stage): step 1/1. Its function is as follows. Catalyzes the reversible conversion of ribose-5-phosphate to ribulose 5-phosphate. This is Ribose-5-phosphate isomerase A from Haemophilus influenzae (strain 86-028NP).